A 159-amino-acid polypeptide reads, in one-letter code: Endoribonuclease YbeY (159 aa).

The Zn(2+) site is built by histidine 114, histidine 118, and histidine 124.

Belongs to the endoribonuclease YbeY family. Zn(2+) is required as a cofactor.

The protein resides in the cytoplasm. In terms of biological role, single strand-specific metallo-endoribonuclease involved in late-stage 70S ribosome quality control and in maturation of the 3' terminus of the 16S rRNA. The protein is Endoribonuclease YbeY of Pectobacterium carotovorum subsp. carotovorum (strain PC1).